Reading from the N-terminus, the 41-residue chain is uncharacterized protein (41 aa).

A signal peptide spans methionine 1–serine 23.

This is an uncharacterized protein from Escherichia coli (strain K12).